A 131-amino-acid polypeptide reads, in one-letter code: Small ribosomal subunit protein uS8 (131 aa).

The protein belongs to the universal ribosomal protein uS8 family. In terms of assembly, part of the 30S ribosomal subunit. Contacts proteins S5 and S12.

In terms of biological role, one of the primary rRNA binding proteins, it binds directly to 16S rRNA central domain where it helps coordinate assembly of the platform of the 30S subunit. The protein is Small ribosomal subunit protein uS8 of Ralstonia pickettii (strain 12J).